The following is a 335-amino-acid chain: MPSTRPLPRPSSRSLRRLALGLGLAFGLGATAAAQTTMRINISTAQNSHQGVAIDTFAKEVEKRTGGRYKVQTFYNAALGAERESVEAVQLGTHELTFSSSGPIPNFVPETKILDVPFLFRDKAHARAVLDGPIGQELLTRFDGKGFKALAWAENGFRHMSNSKRAVKEPGDLKGLKMRTMENPVHIAAYKGFGIVTTPMAFSEVFTALQQGTVDGQENPLSVIISAKFDQVQKHLTLTGHVYSPALFLMNKALFDKLPAADQQAFIDAARQGAKLNRARVDEDDAKGVADLRAKGMTVIDNIDKARFVAALAPVNAQFEKQFGKAALEQIRSAQ.

An N-terminal signal peptide occupies residues 1-34 (MPSTRPLPRPSSRSLRRLALGLGLAFGLGATAAA). Residues Gln50, Glu82, 155–158 (NGFR), Arg179, and Asn219 contribute to the (R)-pantoate site.

Belongs to the bacterial solute-binding protein 7 family. In terms of assembly, the complex is comprised of an extracytoplasmic solute-binding protein and a heteromeric permease formed by two transmembrane proteins.

Its subcellular location is the periplasm. Its function is as follows. Solute-binding protein that binds (R)-pantoate and D-erythronate (in vitro). Probably part of a tripartite ATP-independent periplasmic (TRAP) transport system that mediates solute transport into the cytoplasm. The chain is Solute-binding protein Veis_3954 from Verminephrobacter eiseniae (strain EF01-2).